The sequence spans 109 residues: Large ribosomal subunit protein uL24 (109 aa).

The protein belongs to the universal ribosomal protein uL24 family. Part of the 50S ribosomal subunit.

Its function is as follows. One of two assembly initiator proteins, it binds directly to the 5'-end of the 23S rRNA, where it nucleates assembly of the 50S subunit. Functionally, one of the proteins that surrounds the polypeptide exit tunnel on the outside of the subunit. This Geotalea uraniireducens (strain Rf4) (Geobacter uraniireducens) protein is Large ribosomal subunit protein uL24.